A 457-amino-acid polypeptide reads, in one-letter code: 3-isopropylmalate dehydratase large subunit (457 aa).

[4Fe-4S] cluster contacts are provided by Cys-337, Cys-397, and Cys-400.

The protein belongs to the aconitase/IPM isomerase family. LeuC type 1 subfamily. Heterodimer of LeuC and LeuD. [4Fe-4S] cluster serves as cofactor.

It carries out the reaction (2R,3S)-3-isopropylmalate = (2S)-2-isopropylmalate. It functions in the pathway amino-acid biosynthesis; L-leucine biosynthesis; L-leucine from 3-methyl-2-oxobutanoate: step 2/4. Functionally, catalyzes the isomerization between 2-isopropylmalate and 3-isopropylmalate, via the formation of 2-isopropylmaleate. This Oenococcus oeni (strain ATCC BAA-331 / PSU-1) protein is 3-isopropylmalate dehydratase large subunit.